Consider the following 360-residue polypeptide: Photosystem II protein D1 (360 aa).

3 helical membrane-spanning segments follow: residues 30-47 (YVGW…AAAI), 119-134 (HFLI…QWEL), and 143-157 (WICV…AAFA). His-119 provides a ligand contact to chlorophyll a. Trp-127 contacts pheophytin a. Positions 171 and 190 each coordinate [CaMn4O5] cluster. The helical transmembrane segment at 198-219 (FHMAGVAGMFGGSLFSAMHGSL) threads the bilayer. His-199 is a chlorophyll a binding site. A quinone contacts are provided by residues His-216 and 265-266 (SF). A Fe cation-binding site is contributed by His-216. His-273 contacts Fe cation. The helical transmembrane segment at 275 to 289 (FLAIFPVVCVWLTSM) threads the bilayer. Residues His-333, Glu-334, Asp-343, and Ala-345 each coordinate [CaMn4O5] cluster. Residues 346–360 (AAESTSVALVAPSIG) constitute a propeptide that is removed on maturation.

It belongs to the reaction center PufL/M/PsbA/D family. PSII is composed of 1 copy each of membrane proteins PsbA, PsbB, PsbC, PsbD, PsbE, PsbF, PsbH, PsbI, PsbJ, PsbK, PsbL, PsbM, PsbT, PsbX, PsbY, Psb30/Ycf12, peripheral proteins PsbO, CyanoQ (PsbQ), PsbU, PsbV and a large number of cofactors. It forms dimeric complexes. The D1/D2 heterodimer binds P680, chlorophylls that are the primary electron donor of PSII, and subsequent electron acceptors. It shares a non-heme iron and each subunit binds pheophytin, quinone, additional chlorophylls, carotenoids and lipids. D1 provides most of the ligands for the Mn4-Ca-O5 cluster of the oxygen-evolving complex (OEC). There is also a Cl(-1) ion associated with D1 and D2, which is required for oxygen evolution. The PSII complex binds additional chlorophylls, carotenoids and specific lipids. serves as cofactor. Post-translationally, tyr-162 forms a radical intermediate that is referred to as redox-active TyrZ, YZ or Y-Z. C-terminally processed by CtpA; processing is essential to allow assembly of the oxygen-evolving complex and thus photosynthetic growth.

It localises to the cellular thylakoid membrane. It carries out the reaction 2 a plastoquinone + 4 hnu + 2 H2O = 2 a plastoquinol + O2. In terms of biological role, photosystem II (PSII) is a light-driven water:plastoquinone oxidoreductase that uses light energy to abstract electrons from H(2)O, generating O(2) and a proton gradient subsequently used for ATP formation. It consists of a core antenna complex that captures photons, and an electron transfer chain that converts photonic excitation into a charge separation. The D1/D2 (PsbA/PsbD) reaction center heterodimer binds P680, the primary electron donor of PSII as well as several subsequent electron acceptors. In Prochlorococcus marinus (strain SARG / CCMP1375 / SS120), this protein is Photosystem II protein D1.